A 217-amino-acid polypeptide reads, in one-letter code: PRELI domain-containing protein 1, mitochondrial (217 aa).

The PRELI/MSF1 domain occupies 36–174; the sequence is TEDIVHREVT…ILAKLQGEAP (139 aa).

Forms a complex with TRIAP1 in the mitochondrion intermembrane space. Interacts with OPA1 and AIFM1. Abundantly expressed in all tissues tested except testis with highest levels in thymus.

The protein localises to the mitochondrion. Its subcellular location is the mitochondrion intermembrane space. It catalyses the reaction a 1,2-diacyl-sn-glycero-3-phosphate(in) = a 1,2-diacyl-sn-glycero-3-phosphate(out). Involved in the modulation of the mitochondrial apoptotic pathway by ensuring the accumulation of cardiolipin (CL) in mitochondrial membranes. In vitro, the TRIAP1:PRELID1 complex mediates the transfer of phosphatidic acid (PA) between liposomes and probably functions as a PA transporter across the mitochondrion intermembrane space to provide PA for CL synthesis in the inner membrane. Regulates the mitochondrial apoptotic pathway in primary Th cells. Regulates Th cell differentiation by down-regulating STAT6 thereby reducing IL-4-induced Th2 cell number. May be important for the development of vital and immunocompetent organs. This Mus musculus (Mouse) protein is PRELI domain-containing protein 1, mitochondrial (Prelid1).